The following is a 188-amino-acid chain: Inactive cysteine S-methyltransferase OspZ (188 aa).

This sequence belongs to the NleE/OspZ family.

Its subcellular location is the secreted. The protein resides in the host cytoplasm. It localises to the host nucleus. Functionally, inactive effector protein: in contrast to other members of the family, does not have the ability to inhibit host cell NF-kappa-B activation. Probably lacks cysteine S-methyltransferase activity due to its inability to bind S-adenosyl-L-methionine at the C-terminus. This Shigella flexneri protein is Inactive cysteine S-methyltransferase OspZ.